A 147-amino-acid polypeptide reads, in one-letter code: Proteinase inhibitor type-2 T (147 aa).

Residues 1–25 (MAVHKEVSFVAYLLIVLGMFLYVDA) form the signal peptide. A run of 2 repeats spans residues 25–82 (ALGC…PKNP) and 83–142 (KACP…EPKP). Disulfide bonds link C28-C116, C32-C112, C40-C122, C52-C89, C55-C73, C56-C85, C62-C98, and C115-C133.

The protein belongs to the protease inhibitor I20 (potato type II proteinase inhibitor) family.

Inhibitor of trypsin and chymotrypsin. This Solanum tuberosum (Potato) protein is Proteinase inhibitor type-2 T (PIN2T).